Consider the following 246-residue polypeptide: Proteasome subunit alpha type-6 (246 aa).

It belongs to the peptidase T1A family. As to quaternary structure, the 26S proteasome consists of a 20S proteasome core and two 19S regulatory subunits. The 20S proteasome core is composed of 28 subunits that are arranged in four stacked rings, resulting in a barrel-shaped structure. The two end rings are each formed by seven alpha subunits, and the two central rings are each formed by seven beta subunits. The catalytic chamber with the active sites is on the inside of the barrel.

It localises to the cytoplasm. It is found in the nucleus. In terms of biological role, the proteasome is a multicatalytic proteinase complex which is characterized by its ability to cleave peptides with Arg, Phe, Tyr, Leu, and Glu adjacent to the leaving group at neutral or slightly basic pH. The proteasome has an ATP-dependent proteolytic activity. This is Proteasome subunit alpha type-6 (pas-1) from Caenorhabditis elegans.